The following is a 298-amino-acid chain: Rhodomycin D methylesterase DauP (298 aa).

Residues 25–277 (PLLLIAGGNL…VEIENMGHAL (253 aa)) form the AB hydrolase-1 domain.

The protein belongs to the methyl esterase DnrP family.

The enzyme catalyses rhodomycin D + H2O = 10-carboxy-13-deoxycarminomycin + methanol + H(+). The catalysed reaction is 4-O-methylrhodomycin D + H2O = 10-carboxy-13-deoxydaunorubicin + methanol + H(+). The protein operates within antibiotic biosynthesis; daunorubicin biosynthesis. Its pathway is antibiotic biosynthesis; carminomycin biosynthesis. Functionally, involved in the biosynthesis of the anthracyclines carminomycin and daunorubicin (daunomycin) which are aromatic polyketide antibiotics that exhibit high cytotoxicity and are widely applied in the chemotherapy of a variety of cancers. Catalyzes the removal of methyl group from the carbomethoxy group of rhodomycin D (10-carbomethoxy-13-deoxycarminomycin) and 4-O-methylrhodomycin D to yield 10-carboxy-13-deoxycarminomycin and 10-carboxy-13-deoxydaunorubicin, respectively. Could be also involved in the decarboxylation of 10-carboxy-13-deoxycarminomycin and 10-carboxy-13-deoxydaunorubicin to yield 13-deoxycarminomycin and 13-deoxydaunorubicin, respectively. It seems that DauK may influence the ability of DauP to carry out the decarboxylation. This is Rhodomycin D methylesterase DauP (dauP) from Streptomyces sp. (strain C5).